The primary structure comprises 312 residues: Zinc transporter ZitB (312 aa).

The next 6 membrane-spanning stretches (helical) occupy residues 16–36, 40–60, 81–101, 117–137, 153–173, and 177–197; these read LLIAFAITTLFMVTEAIGGWL, LALLADAGHMLTDSAALFIAL, LTTLAAFVNAAALLLIVILIV, TPMLIIAIAGLLANIFCFWIL, LHVLSDLLGSVGAMIAAIVIL, and WTPIDPILSVLVSVLILRSAW.

It belongs to the cation diffusion facilitator (CDF) transporter (TC 2.A.4) family. SLC30A subfamily.

The protein localises to the cell inner membrane. Functionally, involved in zinc efflux across the cytoplasmic membrane, thus reducing zinc accumulation in the cytoplasm and rendering bacteria more resistant to zinc. It may contribute to zinc homeostasis at low concentrations of zinc. The chain is Zinc transporter ZitB from Yersinia pestis.